Consider the following 379-residue polypeptide: Stimulator of interferon genes protein (379 aa).

Over 1-17 (MPYSNLHPSIPRPRSYR) the chain is Cytoplasmic. The segment at 1–190 (MPYSNLHPSI…MFNQLHNNML (190 aa)) is mediates interaction with ZDHHC1 and ZDHHC11. The helical transmembrane segment at 18–34 (FKLAAFVLLVGSLMSLW) threads the bilayer. The Lumenal segment spans residues 35–44 (MTGEPPSHTL). Residues 45-69 (HYLALHVASQQLGLLLKKLCCLAEE) form a helical membrane-spanning segment. The Cytoplasmic segment spans residues 70 to 91 (LCHVQSRYQGSYWKAVRACVGS). The S-palmitoyl cysteine moiety is linked to residue C88. Residues 92–106 (PICFMALILLSFYFY) form a helical membrane-spanning segment. At 107 to 116 (CSLENTSDLR) the chain is on the lumenal side. The helical transmembrane segment at 117-134 (LAWHLGILVLSKSLSMTL) threads the bilayer. Residues 135–379 (DLQSLAPAEV…QPLPLRTDLI (245 aa)) lie on the Cytoplasmic side of the membrane. K151 participates in a covalent cross-link: Glycyl lysine isopeptide (Lys-Gly) (interchain with G-Cter in ubiquitin). The segment at 153 to 340 (FNVAHGLAWS…RHIRQEEKEE (188 aa)) is cyclic dinucleotide-binding domain (CBD). 162–167 (SYYIGY) contacts 2',3'-cGAMP. Position 166 (G166) interacts with 3',3'-c-di-GMP. Residue Y167 coordinates 2',3'-cUAMP. K236 is covalently cross-linked (Glycyl lysine isopeptide (Lys-Gly) (interchain with G-Cter in ubiquitin)). R238 lines the 2',3'-cUAMP pocket. 2',3'-cGAMP-binding positions include 238 to 241 (RAYS) and T263. 3',3'-c-di-GMP-binding positions include 238 to 241 (RAYS) and T263. Phosphoserine is present on S241. T263 contributes to the 2',3'-cUAMP binding site. Residue K338 forms a Glycyl lysine isopeptide (Lys-Gly) (interchain with G-Cter in SUMO) linkage. The segment at 340-379 (EVTMSGPPTSVAPRPSLLSQEPRLLISGMEQPLPLRTDLI) is C-terminal tail (CTT). Position 355 is a phosphoserine (S355). Phosphoserine; by TBK1 is present on residues S358 and S366. The short motif at 363–366 (LLIS) is the pLxIS motif element.

Belongs to the STING family. In terms of assembly, homodimer; forms a homodimer in absence of cyclic nucleotide (c-di-GMP or cGAMP); 'Lys-63'-linked ubiquitination at Lys-151 is required for homodimerization. Homotetramer; in presence of cyclic nucleotide (c-di-GMP or cGAMP), forms tetramers and higher-order oligomers through side-by-side packing. Interacts (when phosphorylated) with IRF3; following activation and phosphorylation on the pLxIS motif by TBK1, recruits IRF3. Interacts with RIGI, MAVS and SSR2. Interacts with RNF5 and TRIM56. Interacts with TBK1; when homodimer, leading to subsequent production of IFN-beta. Interacts with IFIT1 and IFIT2. Interacts with TRIM29; this interaction induces STING1 ubiquitination and subsequent degradation. Associates with the MHC-II complex. Interacts with STEEP1; interaction takes place upon cGAMP-activation and STING1 phosphorylation by MAP3K7/TAK1 and promotes STING1 translocation to COPII vesicles. Interacts with SEC24A, SEC24B and SEC24C; promoting translocation to COPII vesicles. Interacts (when ubiquitinated) with SQSTM1; leading to relocalization to autophagosomes. Interacts with SURF4. Interacts with HNRNPA2B1. Interacts with ZDHHC1; ZDHHC1 constitutively interacts with STING1 and in presence of DNA viruses activates it by promoting its cGAMP-induced oligomerization and the recruitment of downstream signaling components. Interacts with ZDHHC11; in presence of DNA viruses promotes the recruitment of IRF3 to STING1. Interacts with TOMM70. Interacts with TAB1; promoting recruitment of TAB1 to the endoplasmic reticulum membrane and subsequent activation of MAP3K7/TAK1. Interacts (via transmembrane domain) with TMEM203. Interacts with DDX41. Post-translationally, phosphorylation by TBK1 leads to activation and production of IFN-beta. Following cyclic nucleotide (c-di-GMP or cGAMP)-binding, activation and translocation from the endoplasmic reticulum, STING1 is phosphorylated by TBK1 at Ser-366 in the pLxIS motif. The phosphorylated pLxIS motif constitutes an IRF3-binding motif, leading to recruitment of the transcription factor IRF3 to induce type-I interferons and other cytokines. Phosphorylated on tyrosine residues upon MHC-II aggregation. Dephosphorylation by PPP6C leads to inactivation and decreased production of IFN-beta. Phosphorylation at Ser-358 is also required to activate IRF3. Phosphorylation at Ser-355 by MAP3K7/TAK1 facilitates its interaction with STEEP1, promoting STING1 translocation to COPII vesicles. In terms of processing, ubiquitinated. Ubiquitinated via 'Lys-63'-linked ubiquitin chains in response to double-stranded DNA treatment, leading to relocalization to autophagosomes and subsequent degradation; this process is dependent on SQSTM1. 'Lys-63'-linked ubiquitination mediated by TRIM56 at Lys-151 promotes homodimerization and recruitment of the antiviral kinase TBK1 and subsequent production of IFN-beta. 'Lys-48'-linked polyubiquitination at Lys-151 occurring after viral infection is mediated by RNF5 and leads to proteasomal degradation. 'Lys-11'-linked polyubiquitination at Lys-151 by RNF26 leads to stabilize STING1: it protects STING1 from RNF5-mediated 'Lys-48'-linked polyubiquitination. 'Lys-33'-linked and 'Lys-48'-linked deubiquitinated by USP20; leading to its stabilization and promotion of innate antiviral response. 'Lys-48'-linked deubiquitinated by USP44; leading to its stabilization and promotion of innate antiviral response. Deubiquitinated by USP13; leading to inhibition of innate antiviral response. 'Lys-63'-linked deubiquitinated by USP49; leading to inhibition of the subsequent recruitment of TBK1 to the signaling complex. 'Lys-63'-linked ubiquitination mediated by RNF39 promotes the activation of the cGAS-STING pathway. Sumoylated at Lys-338 by TRIM38 during the early phase of viral infection, promoting its stability by preventing its relocalization to autophagosomes and subsequent degradation. Desumoylated by SENP2 during the late phase of viral infection. Post-translationally, palmitoylation takes place in the Golgi apparatus and creates a platform for the recruitment of TBK1.

The protein localises to the endoplasmic reticulum membrane. It is found in the cytoplasm. It localises to the perinuclear region. Its subcellular location is the endoplasmic reticulum-Golgi intermediate compartment membrane. The protein resides in the golgi apparatus membrane. The protein localises to the cytoplasmic vesicle. It is found in the autophagosome membrane. It localises to the mitochondrion outer membrane. Its subcellular location is the cell membrane. The catalysed reaction is H(+)(in) = H(+)(out). With respect to regulation, in contrast to mouse protein, not activated by anticancer molecule 5,6-dimethylxanthenone 4-acetic acid (DMXAA). In terms of biological role, facilitator of innate immune signaling that acts as a sensor of cytosolic DNA from bacteria and viruses and promotes the production of type I interferon (IFN-alpha and IFN-beta). Innate immune response is triggered in response to non-CpG double-stranded DNA from viruses and bacteria delivered to the cytoplasm. Acts by binding cyclic dinucleotides: recognizes and binds cyclic di-GMP (c-di-GMP), a second messenger produced by bacteria, cyclic UMP-AMP (2',3'-cUAMP), and cyclic GMP-AMP (cGAMP), a messenger produced by CGAS in response to DNA virus in the cytosol. Upon binding to c-di-GMP, cUAMP or cGAMP, STING1 oligomerizes, translocates from the endoplasmic reticulum and is phosphorylated by TBK1 on the pLxIS motif, leading to recruitment and subsequent activation of the transcription factor IRF3 to induce expression of type I interferon and exert a potent anti-viral state. Exhibits 2',3' phosphodiester linkage-specific ligand recognition: can bind both 2'-3' linked cGAMP (2'-3'-cGAMP) and 3'-3' linked cGAMP but is preferentially activated by 2'-3' linked cGAMP. The preference for 2'-3'-cGAMP, compared to other linkage isomers is probably due to the ligand itself, whichs adopts an organized free-ligand conformation that resembles the STING1-bound conformation and pays low energy costs in changing into the active conformation. In addition to promote the production of type I interferons, plays a direct role in autophagy. Following cGAMP-binding, STING1 buds from the endoplasmic reticulum into COPII vesicles, which then form the endoplasmic reticulum-Golgi intermediate compartment (ERGIC). The ERGIC serves as the membrane source for WIPI2 recruitment and LC3 lipidation, leading to formation of autophagosomes that target cytosolic DNA or DNA viruses for degradation by the lysosome. Promotes autophagy by acting as a proton channel that directs proton efflux from the Golgi to facilitate MAP1LC3B/LC3B lipidation. The autophagy- and interferon-inducing activities can be uncoupled and autophagy induction is independent of TBK1 phosphorylation. Autophagy is also triggered upon infection by bacteria: following c-di-GMP-binding, which is produced by live Gram-positive bacteria, promotes reticulophagy. May be involved in translocon function, the translocon possibly being able to influence the induction of type I interferons. May be involved in transduction of apoptotic signals via its association with the major histocompatibility complex class II (MHC-II). The polypeptide is Stimulator of interferon genes protein (Rattus norvegicus (Rat)).